The sequence spans 610 residues: Glutamine--fructose-6-phosphate aminotransferase [isomerizing] (610 aa).

C2 functions as the Nucleophile; for GATase activity in the catalytic mechanism. The Glutamine amidotransferase type-2 domain maps to 2-218 (CGIVGAVAQR…EGDVAEITRR (217 aa)). 2 consecutive SIS domains span residues 286–426 (AVEI…QQNR) and 459–600 (LAPD…VDQP). Catalysis depends on K605, which acts as the For Fru-6P isomerization activity.

Homodimer.

It is found in the cytoplasm. The catalysed reaction is D-fructose 6-phosphate + L-glutamine = D-glucosamine 6-phosphate + L-glutamate. In terms of biological role, catalyzes the first step in hexosamine metabolism, converting fructose-6P into glucosamine-6P using glutamine as a nitrogen source. This chain is Glutamine--fructose-6-phosphate aminotransferase [isomerizing], found in Aliivibrio fischeri (strain ATCC 700601 / ES114) (Vibrio fischeri).